We begin with the raw amino-acid sequence, 503 residues long: ATP synthase subunit alpha (503 aa).

169 to 176 (GDRQTGKT) is a binding site for ATP.

This sequence belongs to the ATPase alpha/beta chains family. As to quaternary structure, F-type ATPases have 2 components, CF(1) - the catalytic core - and CF(0) - the membrane proton channel. CF(1) has five subunits: alpha(3), beta(3), gamma(1), delta(1), epsilon(1). CF(0) has three main subunits: a(1), b(2) and c(9-12). The alpha and beta chains form an alternating ring which encloses part of the gamma chain. CF(1) is attached to CF(0) by a central stalk formed by the gamma and epsilon chains, while a peripheral stalk is formed by the delta and b chains.

It localises to the cell membrane. It catalyses the reaction ATP + H2O + 4 H(+)(in) = ADP + phosphate + 5 H(+)(out). Functionally, produces ATP from ADP in the presence of a proton gradient across the membrane. The alpha chain is a regulatory subunit. This chain is ATP synthase subunit alpha, found in Macrococcus caseolyticus (strain JCSC5402) (Macrococcoides caseolyticum).